The primary structure comprises 381 residues: Opsin Rh2 (381 aa).

Topologically, residues 1–56 are extracellular; the sequence is MERSLLPEPPLAMALLGPRFEAQTGGNRSVLDNVLPDMAPLVNPYWSRFAPMDPTM. The N-linked (GlcNAc...) asparagine glycan is linked to Asn-27. The helical transmembrane segment at 57–81 threads the bilayer; that stretch reads SKILGLFTLVILIISCCGNGVVVYI. Topologically, residues 82–93 are cytoplasmic; sequence FGGTKSLRTPAN. A helical transmembrane segment spans residues 94 to 119; sequence LLVLNLAFSDFCMMASQSPVMIINFY. At 120 to 133 the chain is on the extracellular side; sequence YETWVLGPLWCDIY. Cys-130 and Cys-207 are disulfide-bonded. A helical membrane pass occupies residues 134–153; the sequence is AACGSLFGCVSIWSMCMIAF. The Cytoplasmic portion of the chain corresponds to 154-172; that stretch reads DRYNVIVKGINGTPMTIKT. Residues 173–196 form a helical membrane-spanning segment; that stretch reads SIMKIAFIWMMAVFWTIMPLIGWS. The Extracellular segment spans residues 197–220; sequence SYVPEGNLTACSIDYMTRQWNPRS. A helical membrane pass occupies residues 221 to 248; that stretch reads YLITYSLFVYYTPLFMICYSYWFIIATV. Residues 249–283 are Cytoplasmic-facing; sequence AAHEKAMRDQAKKMNVKSLRSSEDCDKSAENKLAK. Residues 284–307 form a helical membrane-spanning segment; it reads VALTTISLWFMAWTPYLIICYFGL. Residues 308–314 are Extracellular-facing; the sequence is FKIDGLT. Residues 315–339 form a helical membrane-spanning segment; that stretch reads PLTTIWGATFAKTSAVYNPIVYGIS. At Lys-326 the chain carries N6-(retinylidene)lysine. The Cytoplasmic segment spans residues 340-381; it reads HPKYRLVLKEKCPMCVCGSTDEPKPDAPPSDTETTSEAESKA. Residues 358–381 are disordered; sequence STDEPKPDAPPSDTETTSEAESKA. Over residues 370-381 the composition is skewed to polar residues; the sequence is DTETTSEAESKA.

It belongs to the G-protein coupled receptor 1 family. Opsin subfamily. In terms of processing, some or all of the Ser/Thr residues present in the C-terminal part may be phosphorylated.

The protein resides in the membrane. Its function is as follows. Visual pigments are the light-absorbing molecules that mediate vision. They consist of an apoprotein, opsin, covalently linked to cis-retinal. This chain is Opsin Rh2 (Rh2), found in Drosophila pseudoobscura pseudoobscura (Fruit fly).